The primary structure comprises 715 residues: Polyribonucleotide nucleotidyltransferase (715 aa).

Residues aspartate 488 and aspartate 494 each coordinate Mg(2+). Residues 555–614 (PKIETIKIPVDKIREVIGSGGKVIREIVEKTGAKIDIGEDGTIKIAAAEQTKIDAAKEWI) enclose the KH domain. The 69-residue stretch at 624 to 692 (GQIYTGKVVK…DRGKTRLSMK (69 aa)) folds into the S1 motif domain. The tract at residues 692 to 715 (KVVDQETGEDLSKSNEKAEEPADA) is disordered. Positions 701 to 715 (DLSKSNEKAEEPADA) are enriched in basic and acidic residues.

Belongs to the polyribonucleotide nucleotidyltransferase family. The cofactor is Mg(2+).

The protein resides in the cytoplasm. It carries out the reaction RNA(n+1) + phosphate = RNA(n) + a ribonucleoside 5'-diphosphate. Its function is as follows. Involved in mRNA degradation. Catalyzes the phosphorolysis of single-stranded polyribonucleotides processively in the 3'- to 5'-direction. The polypeptide is Polyribonucleotide nucleotidyltransferase (Phenylobacterium zucineum (strain HLK1)).